A 186-amino-acid polypeptide reads, in one-letter code: QRCGEQGSGMECPNNLCCSQYGYCGMGGDYCGKGCQNGACWTSKRCGSQAGGKTCPNNHCCSQYGHCGFGAEYCGAGCQGGPCRADIKCGSQAGGKLCPNNLCCSQWGYCGLGSEFCGEGCQNGACSTDKPCGKDAGGRVCTNNYCCSKWGSCGIGPGYCGAGCQSGGCDGVFAEAIATNSTLLAE.

Q1 is modified (pyrrolidone carboxylic acid). Chitin-binding type-1 domains are found at residues Q1 to T42, S43 to A85, D86 to T128, and D129 to G171. Intrachain disulfides connect C3-C18, C12-C24, C17-C31, C35-C40, C46-C61, C55-C67, C60-C74, C78-C83, C89-C104, C98-C110, C103-C117, C121-C126, C132-C147, C141-C153, C146-C160, and C164-C169. Residue M10–C12 coordinates substrate. S62–Y73 contacts substrate. S114–E115 is a substrate binding site. The propeptide occupies V172–E186. A glycan (N-linked (GlcNAc...) asparagine) is linked at N180.

In terms of assembly, homodimer, u-shaped.

Functionally, N-acetyl-D-glucosamine / N-acetyl-D-neuraminic acid binding lectin. In Triticum aestivum (Wheat), this protein is Agglutinin isolectin 3.